A 147-amino-acid polypeptide reads, in one-letter code: UPF0178 protein AFE_3267 (147 aa).

Belongs to the UPF0178 family.

This Acidithiobacillus ferrooxidans (strain ATCC 23270 / DSM 14882 / CIP 104768 / NCIMB 8455) (Ferrobacillus ferrooxidans (strain ATCC 23270)) protein is UPF0178 protein AFE_3267.